The following is a 329-amino-acid chain: Bifunctional nuclease 2 (329 aa).

Residues 121-256 form the BFN domain; sequence CVHNNPQGGN…YLAYSDGMRV (136 aa). The 36-residue stretch at 287-322 folds into the UVR domain; that stretch reads DTKEFDLVRNMMQAVDEERYDEAAEWRDKLGKFQAK.

This sequence belongs to the bifunctional nuclease family.

The protein resides in the nucleus. In terms of biological role, bifunctional nuclease with both RNase and DNase activities. Involved in basal defense response. Participates in abscisic acid-derived callose deposition following infection by a necrotrophic pathogen. The protein is Bifunctional nuclease 2 (BBD2) of Arabidopsis thaliana (Mouse-ear cress).